The primary structure comprises 43 residues: Protein PsbN (43 aa).

Residues 5–27 (TLVTIFISGSLVSFTGYALYTAF) form a helical membrane-spanning segment.

This sequence belongs to the PsbN family.

Its subcellular location is the plastid. It is found in the chloroplast thylakoid membrane. In terms of biological role, may play a role in photosystem I and II biogenesis. The sequence is that of Protein PsbN from Piper cenocladum (Ant piper).